Here is a 138-residue protein sequence, read N- to C-terminus: Rubber elongation factor protein (138 aa).

Alanine 2 is subject to N-acetylalanine.

This sequence belongs to the REF/SRPP family. As to quaternary structure, in solution, able to form amyloid fibers and aggregates rich in beta-sheets. Interaction with membrane stabilizes the protein, inhibiting the amyloid state and aggregation. Not glycosylated. In terms of tissue distribution, localized in all laticifer layers.

Its subcellular location is the cytoplasm. Functionally, may be part of the rubber biosynthesis machinery. Plays a role in rubber elongation. The protein is Rubber elongation factor protein of Hevea brasiliensis (Para rubber tree).